Here is a 92-residue protein sequence, read N- to C-terminus: Putative phosphotransferase enzyme IIB component SgcB (92 aa).

The PTS EIIB type-2 domain occupies 1 to 92 (MKKILVACGT…KQQIKALLTQ (92 aa)). Residue C8 is the Phosphocysteine intermediate of the active site.

It is found in the cytoplasm. In terms of biological role, the phosphoenolpyruvate-dependent sugar phosphotransferase system (sugar PTS), a major carbohydrate active -transport system, catalyzes the phosphorylation of incoming sugar substrates concomitantly with their translocation across the cell membrane. This chain is Putative phosphotransferase enzyme IIB component SgcB (sgcB), found in Escherichia coli (strain K12).